The following is a 150-amino-acid chain: Deoxyuridine 5'-triphosphate nucleotidohydrolase (150 aa).

Residues 69 to 71, Asn82, 86 to 88, and Lys96 contribute to the substrate site; these read RSG and LID.

It belongs to the dUTPase family. The cofactor is Mg(2+).

The catalysed reaction is dUTP + H2O = dUMP + diphosphate + H(+). Its pathway is pyrimidine metabolism; dUMP biosynthesis; dUMP from dCTP (dUTP route): step 2/2. Functionally, this enzyme is involved in nucleotide metabolism: it produces dUMP, the immediate precursor of thymidine nucleotides and it decreases the intracellular concentration of dUTP so that uracil cannot be incorporated into DNA. The chain is Deoxyuridine 5'-triphosphate nucleotidohydrolase from Neisseria meningitidis serogroup B (strain ATCC BAA-335 / MC58).